We begin with the raw amino-acid sequence, 434 residues long: Trigger factor (434 aa).

Positions 160–245 (GDKVKMNFVG…LTEVQAANLP (86 aa)) constitute a PPIase FKBP-type domain.

Belongs to the FKBP-type PPIase family. Tig subfamily.

It localises to the cytoplasm. It carries out the reaction [protein]-peptidylproline (omega=180) = [protein]-peptidylproline (omega=0). Its function is as follows. Involved in protein export. Acts as a chaperone by maintaining the newly synthesized protein in an open conformation. Functions as a peptidyl-prolyl cis-trans isomerase. This chain is Trigger factor, found in Shewanella sp. (strain W3-18-1).